Reading from the N-terminus, the 25-residue chain is Panurgine R (25 aa).

2 disulfides stabilise this stretch: Cys-8–Cys-23 and Cys-11–Cys-19.

The protein resides in the target cell membrane. It localises to the secreted. Antimicrobial peptide active against Gram-positive bacteria M.luteus (MIC=0.8 uM) and B.subtilis (MIC=1.5 uM). Less active against Gram-negative bacteria E.coli (MIC=32.5 uM) and yeast C.albicans (MIC=18.7 uM). Not active against S.aureus and P.aeruginosa. Has no hemolytic activity against human erythrocytes. Probably acts by disrupting membranes of target cells. The chain is Panurgine R from Panurgus calcaratus (Solitary bee).